A 363-amino-acid polypeptide reads, in one-letter code: Phosphoserine aminotransferase (363 aa).

Arginine 42 is a binding site for L-glutamate. Pyridoxal 5'-phosphate is bound by residues 76–77, tryptophan 101, threonine 151, aspartate 170, and glutamine 193; that span reads AS. Lysine 194 carries the N6-(pyridoxal phosphate)lysine modification. 234-235 contacts pyridoxal 5'-phosphate; sequence NT.

Belongs to the class-V pyridoxal-phosphate-dependent aminotransferase family. SerC subfamily. In terms of assembly, homodimer. Requires pyridoxal 5'-phosphate as cofactor.

It localises to the cytoplasm. The catalysed reaction is O-phospho-L-serine + 2-oxoglutarate = 3-phosphooxypyruvate + L-glutamate. It catalyses the reaction 4-(phosphooxy)-L-threonine + 2-oxoglutarate = (R)-3-hydroxy-2-oxo-4-phosphooxybutanoate + L-glutamate. It functions in the pathway amino-acid biosynthesis; L-serine biosynthesis; L-serine from 3-phospho-D-glycerate: step 2/3. Functionally, catalyzes the reversible conversion of 3-phosphohydroxypyruvate to phosphoserine and of 3-hydroxy-2-oxo-4-phosphonooxybutanoate to phosphohydroxythreonine. The sequence is that of Phosphoserine aminotransferase from Listeria monocytogenes serotype 4b (strain F2365).